The sequence spans 350 residues: Secreted effector protein PipB2 (350 aa).

Pentapeptide repeat domains follow at residues 162–201, 202–241, 247–286, and 287–326; these read ANLT…NLSG, TSLG…SLLG, CNCS…IMEG, and AVLT…TLTD.

Interacts with the host kinesin light chain (KLC), a subunit of the kinesin-1 motor complex.

The protein localises to the secreted. Its subcellular location is the host membrane. Effector proteins function to alter host cell physiology and promote bacterial survival in host tissues. Involved in the reorganization of late endosome/lysosome (LE/Lys) compartments in mammalian cells. Necessary and sufficient to link kinesin-1 onto the Salmonella-containing vacuole (SCV) membrane. Required for centrifugal extension of lysosomal glycoprotein-rich membrane tubules, known as Salmonella-induced filaments (Sifs), away from the SCV and toward the cell periphery. Required for virulence, but not for intracellular survival and replication in phagocytic cells. The chain is Secreted effector protein PipB2 (pipB2) from Salmonella typhimurium (strain LT2 / SGSC1412 / ATCC 700720).